Consider the following 197-residue polypeptide: Peptidyl-tRNA hydrolase (197 aa).

Y23 contacts tRNA. Catalysis depends on H28, which acts as the Proton acceptor. 3 residues coordinate tRNA: F73, N75, and N121.

It belongs to the PTH family. As to quaternary structure, monomer.

It localises to the cytoplasm. The catalysed reaction is an N-acyl-L-alpha-aminoacyl-tRNA + H2O = an N-acyl-L-amino acid + a tRNA + H(+). Its function is as follows. Hydrolyzes ribosome-free peptidyl-tRNAs (with 1 or more amino acids incorporated), which drop off the ribosome during protein synthesis, or as a result of ribosome stalling. Functionally, catalyzes the release of premature peptidyl moieties from peptidyl-tRNA molecules trapped in stalled 50S ribosomal subunits, and thus maintains levels of free tRNAs and 50S ribosomes. The polypeptide is Peptidyl-tRNA hydrolase (Frankia alni (strain DSM 45986 / CECT 9034 / ACN14a)).